Reading from the N-terminus, the 551-residue chain is Putative transport protein CGSHiEE_03135 (551 aa).

The next 5 helical transmembrane spans lie at 4 to 24 (IAIT…IGHW), 28 to 48 (GVGL…HFTD), 65 to 85 (FGLI…FFSS), 95 to 115 (AFAI…HKIA), and 157 to 177 (VSYA…MWLI). 2 consecutive RCK C-terminal domains span residues 191–275 (RFNA…IIGY) and 277–360 (VDAP…VIGN). The next 6 helical transmembrane spans lie at 370–390 (MLPV…PFYI), 402–424 (AGGP…LYWF), 438–458 (IVLF…DTLV), 463–483 (LEWM…AGTI), 492–512 (YLTI…LAFA), and 529–549 (VYPL…VLLW).

It belongs to the AAE transporter (TC 2.A.81) family. YidE subfamily.

The protein localises to the cell membrane. In Haemophilus influenzae (strain PittEE), this protein is Putative transport protein CGSHiEE_03135.